A 141-amino-acid polypeptide reads, in one-letter code: Hemoglobin subunit alpha-A (141 aa).

The 141-residue stretch at 1–141 (VLSGSDKTNV…VGNVLTAKYR (141 aa)) folds into the Globin domain. H58 is a binding site for O2. A heme b-binding site is contributed by H87.

The protein belongs to the globin family. Heterotetramer of two alpha chains and two beta chains. In terms of tissue distribution, red blood cells.

In terms of biological role, involved in oxygen transport from the lung to the various peripheral tissues. In Chroicocephalus ridibundus (Black-headed gull), this protein is Hemoglobin subunit alpha-A (HBAA).